A 174-amino-acid polypeptide reads, in one-letter code: Peptide methionine sulfoxide reductase MsrA (174 aa).

Cysteine 10 is a catalytic residue.

It belongs to the MsrA Met sulfoxide reductase family.

It carries out the reaction L-methionyl-[protein] + [thioredoxin]-disulfide + H2O = L-methionyl-(S)-S-oxide-[protein] + [thioredoxin]-dithiol. The catalysed reaction is [thioredoxin]-disulfide + L-methionine + H2O = L-methionine (S)-S-oxide + [thioredoxin]-dithiol. In terms of biological role, has an important function as a repair enzyme for proteins that have been inactivated by oxidation. Catalyzes the reversible oxidation-reduction of methionine sulfoxide in proteins to methionine. In Acinetobacter baumannii (strain SDF), this protein is Peptide methionine sulfoxide reductase MsrA.